The following is a 136-amino-acid chain: Protein NrdI (136 aa).

Belongs to the NrdI family.

Its function is as follows. Probably involved in ribonucleotide reductase function. The polypeptide is Protein NrdI (Salmonella paratyphi A (strain ATCC 9150 / SARB42)).